We begin with the raw amino-acid sequence, 372 residues long: UDP-2-acetamido-2,6-beta-L-arabino-hexul-4-ose reductase (372 aa).

Residues 7 to 30 (GANG…EVVP), Leu-53, Tyr-103, and Lys-107 contribute to the NAD(+) site. The active-site Proton acceptor is Tyr-103. Substrate is bound by residues Asn-132 and 279 to 282 (HPGV).

The protein belongs to the NAD(P)-dependent epimerase/dehydratase family. In terms of assembly, homodimer.

The enzyme catalyses UDP-2-acetamido-2,6-dideoxy-beta-L-arabino-hex-4-ulose + NADH + H(+) = UDP-2-acetamido-2,6-dideoxy-beta-L-talose + NAD(+). The catalysed reaction is UDP-2-acetamido-2,6-dideoxy-beta-L-arabino-hex-4-ulose + NADPH + H(+) = UDP-2-acetamido-2,6-dideoxy-beta-L-talose + NADP(+). It participates in bacterial outer membrane biogenesis; LPS O-antigen biosynthesis. Functionally, bifunctional enzyme that mediates C-3 epimerization of the second intermediate followed by reduction at C-4 during serogroup O11 O-antigen biosynthesis, thus catalyzing the conversion of UDP-N-acetyl-D-glucosamine to precursors for the biosynthesis of O antigen. This chain is UDP-2-acetamido-2,6-beta-L-arabino-hexul-4-ose reductase, found in Pseudomonas aeruginosa (strain ATCC 29260 / BCRC 12902 / CIP 102967 / NCIMB 11965 / PA103).